A 239-amino-acid polypeptide reads, in one-letter code: Homeobox-leucine zipper protein HOX12 (239 aa).

A disordered region spans residues 25-65 (ATSGGEQKKARQRRRRKVKPEAAAALAGESGGDEQAKKRRL). The homeobox DNA-binding region spans 58 to 117 (EQAKKRRLSDEQARFLEMSFKKERKLETPRKVQLAAELGLDAKQVAVWFQNRRARHKSKL). Residues 107-168 (QNRRARHKSK…KLAAVAAATT (62 aa)) are a coiled coil.

Belongs to the HD-ZIP homeobox family. Class I subfamily. Expressed in seedlings, roots, stems, leaf sheaths and panicles.

The protein resides in the nucleus. Its function is as follows. Probable transcription factor. The polypeptide is Homeobox-leucine zipper protein HOX12 (HOX12) (Oryza sativa subsp. japonica (Rice)).